Consider the following 141-residue polypeptide: Nucleoside diphosphate kinase (141 aa).

ATP contacts are provided by K11, F59, R87, T93, R104, and N114. H117 serves as the catalytic Pros-phosphohistidine intermediate.

The protein belongs to the NDK family. As to quaternary structure, homotetramer. Mg(2+) is required as a cofactor.

The protein resides in the cytoplasm. The catalysed reaction is a 2'-deoxyribonucleoside 5'-diphosphate + ATP = a 2'-deoxyribonucleoside 5'-triphosphate + ADP. The enzyme catalyses a ribonucleoside 5'-diphosphate + ATP = a ribonucleoside 5'-triphosphate + ADP. Its function is as follows. Major role in the synthesis of nucleoside triphosphates other than ATP. The ATP gamma phosphate is transferred to the NDP beta phosphate via a ping-pong mechanism, using a phosphorylated active-site intermediate. The sequence is that of Nucleoside diphosphate kinase from Methylibium petroleiphilum (strain ATCC BAA-1232 / LMG 22953 / PM1).